A 417-amino-acid polypeptide reads, in one-letter code: Dihydrolipoyllysine-residue succinyltransferase component of 2-oxoglutarate dehydrogenase complex (417 aa).

One can recognise a Lipoyl-binding domain in the interval 1–76; the sequence is MAEIKVPELA…QVGEIIGTIS (76 aa). The residue at position 42 (K42) is an N6-lipoyllysine. Residues 75-191 are disordered; that stretch reads ISEGAGESSA…SFDKPVEVQK (117 aa). Basic and acidic residues-rich tracts occupy residues 89–103 and 152–163; these read EKTE…EKQA and RKQDVEAYEKPA. Residues 123 to 160 form the Peripheral subunit-binding (PSBD) domain; sequence IASPSARKLAREKGIDLSQVPTGDPLGRVRKQDVEAYE. Low complexity predominate over residues 164 to 182; that stretch reads SKPAPQQKQQPQAQKAQQS. Catalysis depends on residues H388 and D392.

The protein belongs to the 2-oxoacid dehydrogenase family. Forms a 24-polypeptide structural core with octahedral symmetry. Part of the 2-oxoglutarate dehydrogenase (OGDH) complex composed of E1 (2-oxoglutarate dehydrogenase), E2 (dihydrolipoamide succinyltransferase) and E3 (dihydrolipoamide dehydrogenase); the complex contains multiple copies of the three enzymatic components (E1, E2 and E3). The cofactor is (R)-lipoate.

The enzyme catalyses N(6)-[(R)-dihydrolipoyl]-L-lysyl-[protein] + succinyl-CoA = N(6)-[(R)-S(8)-succinyldihydrolipoyl]-L-lysyl-[protein] + CoA. Its pathway is amino-acid degradation; L-lysine degradation via saccharopine pathway; glutaryl-CoA from L-lysine: step 6/6. E2 component of the 2-oxoglutarate dehydrogenase (OGDH) complex which catalyzes the second step in the conversion of 2-oxoglutarate to succinyl-CoA and CO(2). This Bacillus subtilis (strain 168) protein is Dihydrolipoyllysine-residue succinyltransferase component of 2-oxoglutarate dehydrogenase complex (odhB).